A 428-amino-acid chain; its full sequence is Adenylosuccinate synthetase (428 aa).

Residues 12 to 18 and 40 to 42 contribute to the GTP site; these read GDEGKGK and GHT. Asp13 (proton acceptor) is an active-site residue. Asp13 and Gly40 together coordinate Mg(2+). Residues 13-16, 38-41, Thr130, Arg144, Gln225, Thr240, and Arg304 each bind IMP; these read DEGK and NAGH. Catalysis depends on His41, which acts as the Proton donor. 300–306 is a substrate binding site; it reads VNTGRSR. Residues Arg306, 332–334, and 414–416 contribute to the GTP site; these read KID and GVG.

This sequence belongs to the adenylosuccinate synthetase family. Homodimer. The cofactor is Mg(2+).

The protein resides in the cytoplasm. The catalysed reaction is IMP + L-aspartate + GTP = N(6)-(1,2-dicarboxyethyl)-AMP + GDP + phosphate + 2 H(+). Its pathway is purine metabolism; AMP biosynthesis via de novo pathway; AMP from IMP: step 1/2. Functionally, plays an important role in the de novo pathway of purine nucleotide biosynthesis. Catalyzes the first committed step in the biosynthesis of AMP from IMP. In Clostridium beijerinckii (strain ATCC 51743 / NCIMB 8052) (Clostridium acetobutylicum), this protein is Adenylosuccinate synthetase.